Reading from the N-terminus, the 134-residue chain is Small ribosomal subunit protein uS11 (134 aa).

Disordered regions lie at residues 1 to 24 and 115 to 134; these read MPPKSRAGAVKKVRRKEKKNVAHG and IQDVTPQPHNGCRPPKRRRV. Residues 9–18 show a composition bias toward basic residues; the sequence is AVKKVRRKEK.

This sequence belongs to the universal ribosomal protein uS11 family. As to quaternary structure, part of the 30S ribosomal subunit. Interacts with proteins S7 and S18. Binds to IF-3.

In terms of biological role, located on the platform of the 30S subunit, it bridges several disparate RNA helices of the 16S rRNA. Forms part of the Shine-Dalgarno cleft in the 70S ribosome. In Saccharopolyspora erythraea (strain ATCC 11635 / DSM 40517 / JCM 4748 / NBRC 13426 / NCIMB 8594 / NRRL 2338), this protein is Small ribosomal subunit protein uS11.